The following is a 571-amino-acid chain: Dehydrocurvularin exporter (571 aa).

The disordered stretch occupies residues 1 to 34 (MADGSDLENNHKPELDRSQPGSTSNGSQEQKDPD). The segment covering 8-17 (ENNHKPELDR) has biased composition (basic and acidic residues). Positions 19–28 (QPGSTSNGSQ) are enriched in polar residues. Asn25 carries an N-linked (GlcNAc...) asparagine glycan. Transmembrane regions (helical) follow at residues 47–67 (ILVM…IGII), 86–106 (WYGS…GKLF), 120–140 (FIFL…SVII), 143–163 (AIQG…INYV), 171–191 (LLIG…PVIG), 202–222 (WCFW…LLFL), 238–258 (IILA…VCLT), 275–295 (VIAT…TEWF), 317–337 (LFCL…PIYF), 350–370 (VNTL…GGVI), 379–399 (FELL…ILDV), 405–425 (MYIG…QIPM), 443–463 (IMVM…QSLF), and 514–534 (VFAF…IIPF). The disordered stretch occupies residues 538-571 (PDHGKKDKPATEEAAEEKSEAEGKVSGDKEENHS).

The protein belongs to the major facilitator superfamily. TCR/Tet family.

The protein resides in the cell membrane. Functionally, efflux pump that is probably involved in the export of dehydrocurvularin. The polypeptide is Dehydrocurvularin exporter (Aspergillus terreus).